An 84-amino-acid polypeptide reads, in one-letter code: Large ribosomal subunit protein bL27 (84 aa).

A disordered region spans residues 1–21 (MAHKKGGGSTKNGRDSNPKYL).

Belongs to the bacterial ribosomal protein bL27 family.

The chain is Large ribosomal subunit protein bL27 from Chlorobium luteolum (strain DSM 273 / BCRC 81028 / 2530) (Pelodictyon luteolum).